The sequence spans 83 residues: SPbeta prophage-derived uncharacterized protein YopE (83 aa).

2 consecutive transmembrane segments (helical) span residues 5–25 and 60–80; these read AYFL…FIFV and VIAF…TKLF.

It is found in the cell membrane. The sequence is that of SPbeta prophage-derived uncharacterized protein YopE (yopE) from Bacillus subtilis (strain 168).